The following is a 337-amino-acid chain: Eukaryotic translation initiation factor 3 subunit H (337 aa).

The region spanning 21–153 (VQCDGLAVMK…LKAYRLTPQA (133 aa)) is the MPN domain.

The protein belongs to the eIF-3 subunit H family. Component of the eukaryotic translation initiation factor 3 (eIF-3) complex. The eIF-3 complex interacts with pix. Interacts with mxt.

It localises to the cytoplasm. Component of the eukaryotic translation initiation factor 3 (eIF-3) complex, which is involved in protein synthesis of a specialized repertoire of mRNAs and, together with other initiation factors, stimulates binding of mRNA and methionyl-tRNAi to the 40S ribosome. The eIF-3 complex specifically targets and initiates translation of a subset of mRNAs involved in cell proliferation. This chain is Eukaryotic translation initiation factor 3 subunit H, found in Drosophila grimshawi (Hawaiian fruit fly).